We begin with the raw amino-acid sequence, 275 residues long: Elongation factor Ts (275 aa).

The interval 76–79 is involved in Mg(2+) ion dislocation from EF-Tu; sequence TDFV.

This sequence belongs to the EF-Ts family.

The protein resides in the cytoplasm. Associates with the EF-Tu.GDP complex and induces the exchange of GDP to GTP. It remains bound to the aminoacyl-tRNA.EF-Tu.GTP complex up to the GTP hydrolysis stage on the ribosome. This Rhodococcus opacus (strain B4) protein is Elongation factor Ts.